Reading from the N-terminus, the 480-residue chain is Membrane-bound lytic murein transglycosylase F (480 aa).

The signal sequence occupies residues M1–A15. Positions S16–V259 are non-LT domain. The LT domain stretch occupies residues K260 to Q480. The active site involves E304.

The protein in the N-terminal section; belongs to the bacterial solute-binding protein 3 family. It in the C-terminal section; belongs to the transglycosylase Slt family.

It localises to the cell outer membrane. It carries out the reaction Exolytic cleavage of the (1-&gt;4)-beta-glycosidic linkage between N-acetylmuramic acid (MurNAc) and N-acetylglucosamine (GlcNAc) residues in peptidoglycan, from either the reducing or the non-reducing ends of the peptidoglycan chains, with concomitant formation of a 1,6-anhydrobond in the MurNAc residue.. Murein-degrading enzyme that degrades murein glycan strands and insoluble, high-molecular weight murein sacculi, with the concomitant formation of a 1,6-anhydromuramoyl product. Lytic transglycosylases (LTs) play an integral role in the metabolism of the peptidoglycan (PG) sacculus. Their lytic action creates space within the PG sacculus to allow for its expansion as well as for the insertion of various structures such as secretion systems and flagella. The sequence is that of Membrane-bound lytic murein transglycosylase F from Shewanella sediminis (strain HAW-EB3).